The following is a 463-amino-acid chain: Chitobiosyldiphosphodolichol beta-mannosyltransferase (463 aa).

The Lumenal segment spans residues 1–3 (MKA). Residues 4–24 (WHWSVTLVVIYLAIPVILYLL) traverse the membrane as a helical segment. Residues 25 to 105 (TRKDDRKPLS…PLILNTRKLP (81 aa)) are Cytoplasmic-facing. The helical intramembrane region spans 106–126 (FVVFGILKVIRQHWLLISLLY). Residues 127–463 (KLRGADYLLV…FSSSSSDDDH (337 aa)) lie on the Lumenal side of the membrane.

Belongs to the glycosyltransferase group 1 family.

The protein localises to the endoplasmic reticulum membrane. The enzyme catalyses an N,N'-diacetylchitobiosyl-diphospho-di-trans,poly-cis-dolichol + GDP-alpha-D-mannose = a beta-D-Man-(1-&gt;4)-beta-D-GlcNAc-(1-&gt;4)-alpha-D-GlcNAc-diphospho-di-trans,poly-cis-dolichol + GDP + H(+). Its pathway is protein modification; protein glycosylation. Its function is as follows. Participates in the formation of the lipid-linked precursor oligosaccharide for N-glycosylation. Involved in assembling the dolichol-pyrophosphate-GlcNAc(2)-Man(5) intermediate on the cytoplasmic surface of the ER. This Yarrowia lipolytica (strain CLIB 122 / E 150) (Yeast) protein is Chitobiosyldiphosphodolichol beta-mannosyltransferase (ALG1).